The following is a 510-amino-acid chain: 2,3-bisphosphoglycerate-independent phosphoglycerate mutase (510 aa).

Mn(2+)-binding residues include aspartate 13 and serine 63. Catalysis depends on serine 63, which acts as the Phosphoserine intermediate. Residues histidine 124, 154-155 (RD), arginine 186, arginine 192, 262-265 (RADR), and lysine 334 each bind substrate. Residues aspartate 401, histidine 405, aspartate 442, histidine 443, and histidine 461 each coordinate Mn(2+).

Belongs to the BPG-independent phosphoglycerate mutase family. In terms of assembly, monomer. The cofactor is Mn(2+).

The enzyme catalyses (2R)-2-phosphoglycerate = (2R)-3-phosphoglycerate. It participates in carbohydrate degradation; glycolysis; pyruvate from D-glyceraldehyde 3-phosphate: step 3/5. Its function is as follows. Catalyzes the interconversion of 2-phosphoglycerate and 3-phosphoglycerate. The sequence is that of 2,3-bisphosphoglycerate-independent phosphoglycerate mutase from Vibrio campbellii (strain ATCC BAA-1116).